Consider the following 387-residue polypeptide: Early growth response protein 3 (387 aa).

The segment at 241-283 (PGFGSLPQPPLTLKPIRPRKYPNRPSKTPLHERPHACPAEGCD) is disordered. The span at 269-283 (PLHERPHACPAEGCD) shows a compositional bias: basic and acidic residues. 3 C2H2-type zinc fingers span residues 275-299 (HACP…LRIH), 305-327 (FQCR…IRTH), and 333-355 (FACE…AKIH). The interval 348–387 (RKRHAKIHLKQKEKKSEKGGAPSASSAPTVSLAPVVTTCA) is disordered. Over residues 350 to 360 (RHAKIHLKQKE) the composition is skewed to basic residues.

It belongs to the EGR C2H2-type zinc-finger protein family.

The protein resides in the nucleus. Probable transcription factor involved in muscle spindle development. This chain is Early growth response protein 3 (Egr3), found in Mus musculus (Mouse).